The chain runs to 238 residues: Nuclear transcription factor Y subunit B-9 (238 aa).

A DNA-binding region spans residues 64–70 (MPIANVI). Positions 91–102 (IQECVSEYISFV) are subunit association domain (SAD). The disordered stretch occupies residues 203 to 238 (RYYQNGSSGQDESSVGGGSSSSINGMPAFDHYGQYK). Residues 208 to 227 (GSSGQDESSVGGGSSSSING) are compositionally biased toward low complexity.

Belongs to the NFYB/HAP3 subunit family. In terms of assembly, heterotrimeric transcription factor composed of three components, NF-YA, NF-YB and NF-YC. NF-YB and NF-YC must interact and dimerize for NF-YA association and DNA binding. Interacts with PRN1. Expressed in green siliques. Present in etiolated seedlings.

The protein localises to the nucleus. Functionally, component of the NF-Y/HAP transcription factor complex. The NF-Y complex stimulates the transcription of various genes by recognizing and binding to a CCAAT motif in promoters. Acts as a central regulator of the embryogenesis. Required for the speciation of cotyledon identity and the completion of embryo maturation. Controls seed storage protein genes through the regulation of FUS3 and ABI3. Involved in the blue light (BL) and abscisic acid (ABA) signaling pathways. The polypeptide is Nuclear transcription factor Y subunit B-9 (NFYB9) (Arabidopsis thaliana (Mouse-ear cress)).